Consider the following 201-residue polypeptide: FMN-dependent NADH:quinone oxidoreductase (201 aa).

FMN-binding positions include Ser-10, 16 to 18, 95 to 98, and 139 to 142; these read SQS, MYNF, and TTGG.

It belongs to the azoreductase type 1 family. As to quaternary structure, homodimer. Requires FMN as cofactor.

The catalysed reaction is 2 a quinone + NADH + H(+) = 2 a 1,4-benzosemiquinone + NAD(+). The enzyme catalyses N,N-dimethyl-1,4-phenylenediamine + anthranilate + 2 NAD(+) = 2-(4-dimethylaminophenyl)diazenylbenzoate + 2 NADH + 2 H(+). In terms of biological role, quinone reductase that provides resistance to thiol-specific stress caused by electrophilic quinones. Functionally, also exhibits azoreductase activity. Catalyzes the reductive cleavage of the azo bond in aromatic azo compounds to the corresponding amines. This is FMN-dependent NADH:quinone oxidoreductase from Tolumonas auensis (strain DSM 9187 / NBRC 110442 / TA 4).